A 188-amino-acid polypeptide reads, in one-letter code: Ion-translocating oxidoreductase complex subunit B (188 aa).

The interval 1-23 is hydrophobic; it reads MIEAAVSMSALGLGLGLLLGVAA. The region spanning 29–88 is the 4Fe-4S domain; it reads ESPPIVDAIEGILPGTNCGACGYPGCRGLAEAMSEGAAPVTACAPGGRDVALALAAIVET. Positions 46, 49, 54, 71, 113, 116, 119, 123, 143, 146, 149, and 153 each coordinate [4Fe-4S] cluster. 4Fe-4S ferredoxin-type domains are found at residues 104-133 and 134-163; these read TVAF…GANR and QIHT…ARVK.

The protein belongs to the 4Fe4S bacterial-type ferredoxin family. RnfB subfamily. In terms of assembly, the complex is composed of six subunits: RnfA, RnfB, RnfC, RnfD, RnfE and RnfG. It depends on [4Fe-4S] cluster as a cofactor.

It is found in the cellular chromatophore membrane. In terms of biological role, part of a membrane-bound complex that couples electron transfer with translocation of ions across the membrane. In Cereibacter sphaeroides (strain ATCC 17023 / DSM 158 / JCM 6121 / CCUG 31486 / LMG 2827 / NBRC 12203 / NCIMB 8253 / ATH 2.4.1.) (Rhodobacter sphaeroides), this protein is Ion-translocating oxidoreductase complex subunit B.